A 183-amino-acid polypeptide reads, in one-letter code: Ribulose bisphosphate carboxylase small subunit, chloroplastic 1 (183 aa).

A chloroplast-targeting transit peptide spans Met1–Gln58.

This sequence belongs to the RuBisCO small chain family. Heterohexadecamer of 8 large and 8 small subunits.

Its subcellular location is the plastid. It localises to the chloroplast. In terms of biological role, ruBisCO catalyzes two reactions: the carboxylation of D-ribulose 1,5-bisphosphate, the primary event in carbon dioxide fixation, as well as the oxidative fragmentation of the pentose substrate. Both reactions occur simultaneously and in competition at the same active site. Although the small subunit is not catalytic it is essential for maximal activity. This Amaranthus hypochondriacus (Prince-of-Wales feather) protein is Ribulose bisphosphate carboxylase small subunit, chloroplastic 1.